The sequence spans 253 residues: Triosephosphate isomerase (253 aa).

9–11 (NWK) serves as a coordination point for substrate. Catalysis depends on His96, which acts as the Electrophile. Catalysis depends on Glu169, which acts as the Proton acceptor. Substrate contacts are provided by residues Gly175, Ser215, and 236–237 (GG).

It belongs to the triosephosphate isomerase family. As to quaternary structure, homodimer.

It localises to the cytoplasm. The enzyme catalyses D-glyceraldehyde 3-phosphate = dihydroxyacetone phosphate. It functions in the pathway carbohydrate biosynthesis; gluconeogenesis. It participates in carbohydrate degradation; glycolysis; D-glyceraldehyde 3-phosphate from glycerone phosphate: step 1/1. In terms of biological role, involved in the gluconeogenesis. Catalyzes stereospecifically the conversion of dihydroxyacetone phosphate (DHAP) to D-glyceraldehyde-3-phosphate (G3P). This chain is Triosephosphate isomerase, found in Borrelia garinii subsp. bavariensis (strain ATCC BAA-2496 / DSM 23469 / PBi) (Borreliella bavariensis).